A 276-amino-acid chain; its full sequence is Probable endonuclease 4 (276 aa).

H66, H106, E141, D175, H178, H210, D223, H225, and E255 together coordinate Zn(2+).

The protein belongs to the AP endonuclease 2 family. The cofactor is Zn(2+).

The enzyme catalyses Endonucleolytic cleavage to 5'-phosphooligonucleotide end-products.. Its function is as follows. Endonuclease IV plays a role in DNA repair. It cleaves phosphodiester bonds at apurinic or apyrimidinic (AP) sites, generating a 3'-hydroxyl group and a 5'-terminal sugar phosphate. The protein is Probable endonuclease 4 of Heliobacterium modesticaldum (strain ATCC 51547 / Ice1).